The sequence spans 226 residues: ATP synthase F(0) complex subunit a (226 aa).

Transmembrane regions (helical) follow at residues 6 to 26 (FASF…IVLF), 68 to 88 (WALM…LGLL), 97 to 117 (QLSM…ITGF), 138 to 158 (IPML…ALAV), 164 to 184 (ITAG…LMSI), and 189 to 209 (ALIT…VAMI).

Belongs to the ATPase A chain family. As to quaternary structure, component of the ATP synthase complex composed at least of ATP5F1A/subunit alpha, ATP5F1B/subunit beta, ATP5MC1/subunit c (homooctomer), MT-ATP6/subunit a, MT-ATP8/subunit 8, ATP5ME/subunit e, ATP5MF/subunit f, ATP5MG/subunit g, ATP5MK/subunit k, ATP5MJ/subunit j, ATP5F1C/subunit gamma, ATP5F1D/subunit delta, ATP5F1E/subunit epsilon, ATP5PF/subunit F6, ATP5PB/subunit b, ATP5PD/subunit d, ATP5PO/subunit OSCP. ATP synthase complex consists of a soluble F(1) head domain (subunits alpha(3) and beta(3)) - the catalytic core - and a membrane F(0) domain - the membrane proton channel (subunits c, a, 8, e, f, g, k and j). These two domains are linked by a central stalk (subunits gamma, delta, and epsilon) rotating inside the F1 region and a stationary peripheral stalk (subunits F6, b, d, and OSCP). Interacts with DNAJC30; interaction is direct.

It is found in the mitochondrion inner membrane. It carries out the reaction H(+)(in) = H(+)(out). Functionally, subunit a, of the mitochondrial membrane ATP synthase complex (F(1)F(0) ATP synthase or Complex V) that produces ATP from ADP in the presence of a proton gradient across the membrane which is generated by electron transport complexes of the respiratory chain. ATP synthase complex consist of a soluble F(1) head domain - the catalytic core - and a membrane F(1) domain - the membrane proton channel. These two domains are linked by a central stalk rotating inside the F(1) region and a stationary peripheral stalk. During catalysis, ATP synthesis in the catalytic domain of F(1) is coupled via a rotary mechanism of the central stalk subunits to proton translocation. With the subunit c (ATP5MC1), forms the proton-conducting channel in the F(0) domain, that contains two crucial half-channels (inlet and outlet) that facilitate proton movement from the mitochondrial intermembrane space (IMS) into the matrix. Protons are taken up via the inlet half-channel and released through the outlet half-channel, following a Grotthuss mechanism. This Bos indicus (Zebu) protein is ATP synthase F(0) complex subunit a.